The sequence spans 336 residues: Electron transfer flavoprotein subunit alpha (336 aa).

Position 275-303 (275-303 (LYIACGISGAIQHLAGMQDSDYIIAINKD)) interacts with FAD.

It belongs to the ETF alpha-subunit/FixB family. In terms of assembly, heterodimer of an alpha and a beta subunit. FAD serves as cofactor.

The electron transfer flavoprotein serves as a specific electron acceptor for other dehydrogenases. It transfers the electrons to the main respiratory chain via ETF-ubiquinone oxidoreductase (ETF dehydrogenase). This chain is Electron transfer flavoprotein subunit alpha (etfA), found in Clostridium acetobutylicum (strain ATCC 824 / DSM 792 / JCM 1419 / IAM 19013 / LMG 5710 / NBRC 13948 / NRRL B-527 / VKM B-1787 / 2291 / W).